Reading from the N-terminus, the 287-residue chain is MEVALAHPALKAFMCGSLSGTCSTLLFQPLDLVKTRLQTLQNNMHPGAPKVGMITVLFNVIRTEKLLGLWKGVSPSFMRCIPGVGIYFSTFYSLKQHYFQEGSPSAGEAVLLGAGARCVAGVAMLPFTVIKTRFESGRYNYISVAGALKSVCQNEGPKALYSGLTATLLRDAPFSGIYVMFYSQAKKALPQEISSSSIAPLVNFGCGVVAGILASLATQPADVIKTHMQVSPALYPKTSDAMRHVYVKHGLSGFFRGAVPRSLRRTLMAAMAWTVYEQLMARMGLKS.

Solcar repeat units follow at residues 7–97 (HPAL…LKQH), 104–188 (PSAG…AKKA), and 198–282 (IAPL…LMAR). A run of 6 helical transmembrane segments spans residues 13 to 38 (FMCG…TRLQ), 72 to 98 (GVSP…KQHY), 110 to 135 (VLLG…TRFE), 163 to 186 (GLTA…SQAK), 202 to 228 (VNFG…KTHM), and 257 to 275 (GAVP…AWTV).

Belongs to the mitochondrial carrier (TC 2.A.29) family. SLC25A38 subfamily. At 24 hours post-fertilization, expressed predominantly in posterior blood island, posterior cardinal vein and circulating blood. At 34 hours post-fertilization, becomes restricted to posterior blood island and circulating blood.

It is found in the mitochondrion inner membrane. The catalysed reaction is glycine(in) = glycine(out). Functionally, mitochondrial glycine transporter that imports glycine into the mitochondrial matrix. Plays an important role in providing glycine for the first enzymatic step in heme biosynthesis, the condensation of glycine with succinyl-CoA to produce 5-aminolevulinate (ALA) in the mitochondrial matrix. Required during erythropoiesis. In terms of biological role, may play a role as pro-apoptotic protein that induces caspase-dependent apoptosis. The protein is Mitochondrial glycine transporter B (slc25a38b) of Danio rerio (Zebrafish).